Here is a 146-residue protein sequence, read N- to C-terminus: Basic phospholipase A2 (146 aa).

Residues 1–21 (MYPAHLLVLLAVCVSLLGAAS) form the signal peptide. A propeptide spanning residues 22-27 (IPPLPL) is cleaved from the precursor. Disulfide bonds link Cys38/Cys98, Cys54/Cys145, Cys56/Cys72, Cys71/Cys126, Cys78/Cys119, Cys87/Cys112, and Cys105/Cys117. Residues Tyr55, Gly57, and Gly59 each contribute to the Ca(2+) site. The active site involves His75. Ca(2+) is bound at residue Asp76. The active site involves Asp120.

The protein belongs to the phospholipase A2 family. Group I subfamily. D49 sub-subfamily. Requires Ca(2+) as cofactor. Expressed by the venom gland.

It is found in the secreted. It catalyses the reaction a 1,2-diacyl-sn-glycero-3-phosphocholine + H2O = a 1-acyl-sn-glycero-3-phosphocholine + a fatty acid + H(+). Its function is as follows. Snake venom phospholipase A2 (PLA2) that inhibits neuromuscular transmission by blocking acetylcholine release from the nerve termini. PLA2 catalyzes the calcium-dependent hydrolysis of the 2-acyl groups in 3-sn-phosphoglycerides. The sequence is that of Basic phospholipase A2 from Hydrophis hardwickii (Hardwick's spine-bellied seasnake).